The following is a 324-amino-acid chain: NADH-cytochrome b5 reductase 1 (324 aa).

A helical membrane pass occupies residues 49 to 69 (LNIVLAFVVGLIGSVVVLLYF). An FAD-binding FR-type domain is found at 81–184 (TQWQQYRLME…KGPKGQMRYA (104 aa)). Residues 164 to 179 (GSMK…GPKG) and 190 to 222 (HIGM…QIDF) each bind FAD.

It belongs to the flavoprotein pyridine nucleotide cytochrome reductase family. Monomer. Component of the 2-(3-amino-3-carboxypropyl)histidine synthase complex composed of DPH1, DPH2, DPH3 and a NADH-dependent reductase, predominantly CBR1. FAD serves as cofactor.

The protein resides in the mitochondrion outer membrane. The catalysed reaction is 2 Fe(III)-[cytochrome b5] + NADH = 2 Fe(II)-[cytochrome b5] + NAD(+) + H(+). The enzyme catalyses 2 Fe(3+)-[Dph3] + NADH = 2 Fe(2+)-[Dph3] + NAD(+) + H(+). Its pathway is protein modification; peptidyl-diphthamide biosynthesis. Functionally, NADH-dependent reductase for DPH3 and cytochrome b5. Required for the first step of diphthamide biosynthesis, a post-translational modification of histidine which occurs in elongation factor 2. DPH1 and DPH2 transfer a 3-amino-3-carboxypropyl (ACP) group from S-adenosyl-L-methionine (SAM) to a histidine residue, the reaction is assisted by a reduction system comprising DPH3 and a NADH-dependent reductase, predominantly CBR1. By reducing DPH3, also involved in the formation of the tRNA wobble base modification mcm5s 2U (5-methoxycarbonylmethyl-2-thiouridine), mediated by the elongator complex. The cytochrome b5/NADH cytochrome b5 reductase electron transfer system supports the catalytic activity of several sterol biosynthetic enzymes. The protein is NADH-cytochrome b5 reductase 1 (CBR1) of Mycosarcoma maydis (Corn smut fungus).